Reading from the N-terminus, the 192-residue chain is MITISDAAQAHFVKLLADQPEGTHIRVFVISPGTPSAECGVSYCPPDAVEADDIELEFNGFHAMVDEKSAPFLEDASIDFVTDQLGSQLTLKAPNAKMRKVDADAPLKERIEYVIQSEINPQLASHGGNIMLVDIDEAGIAILQFGGGCNGCSMVDVTLKDGIEKQLLDMFPGELTGVRDVTEHQHGEHSYQ.

[4Fe-4S] cluster is bound by residues C149 and C152.

This sequence belongs to the NfuA family. Homodimer. Requires [4Fe-4S] cluster as cofactor.

Functionally, involved in iron-sulfur cluster biogenesis. Binds a 4Fe-4S cluster, can transfer this cluster to apoproteins, and thereby intervenes in the maturation of Fe/S proteins. Could also act as a scaffold/chaperone for damaged Fe/S proteins. This chain is Fe/S biogenesis protein NfuA, found in Shewanella loihica (strain ATCC BAA-1088 / PV-4).